Consider the following 195-residue polypeptide: Probable serine/threonine-protein kinase BUD32 homolog (195 aa).

One can recognise a Protein kinase domain in the interval 1 to 195; that stretch reads MKVYLGGEAE…GRYVERVSMG (195 aa). K12 provides a ligand contact to ATP. Residue D107 is the Proton acceptor of the active site.

It belongs to the protein kinase superfamily. Tyr protein kinase family. BUD32 subfamily.

It is found in the cytoplasm. The catalysed reaction is L-seryl-[protein] + ATP = O-phospho-L-seryl-[protein] + ADP + H(+). It carries out the reaction L-threonyl-[protein] + ATP = O-phospho-L-threonyl-[protein] + ADP + H(+). Could be involved in the formation of a threonylcarbamoyl group on adenosine at position 37 (t(6)A37) in tRNAs that read codons beginning with adenine. The polypeptide is Probable serine/threonine-protein kinase BUD32 homolog (Archaeoglobus fulgidus (strain ATCC 49558 / DSM 4304 / JCM 9628 / NBRC 100126 / VC-16)).